Here is a 380-residue protein sequence, read N- to C-terminus: Probable G-protein coupled receptor 132 (380 aa).

Topologically, residues 1 to 45 (MCPMLLKNGYNGNATPVTTTAPWASLGLSAKTCNNVSFEESRIVL) are extracellular. A glycan (N-linked (GlcNAc...) asparagine) is linked at Asn-35. The chain crosses the membrane as a helical span at residues 46–68 (VVVYSAVCTLGVPANCLTAWLAL). Residues 69-79 (LQVLQGNVLAV) lie on the Cytoplasmic side of the membrane. The helical transmembrane segment at 80 to 102 (YLLCLALCELLYTGTLPLWVIYI) threads the bilayer. The Extracellular portion of the chain corresponds to 103-116 (RNQHRWTLGLLACK). Cys-115 and Cys-186 are disulfide-bonded. Residues 117–138 (VTAYIFFCNIYVSILFLCCISC) form a helical membrane-spanning segment. Residues 139–158 (DRFVAVVYALESRGRRRRRT) lie on the Cytoplasmic side of the membrane. The chain crosses the membrane as a helical span at residues 159-178 (AILISACIFILVGIVHYPVF). Over 179–197 (QTEDKETCFDMLQMDSRIA) the chain is Extracellular. A helical transmembrane segment spans residues 198–220 (GYYYARFTVGFAIPLSIIAFTNH). Residues 221–246 (RIFRSIKQSMGLSAAQKAKVKHSAIA) are Cytoplasmic-facing. The chain crosses the membrane as a helical span at residues 247–269 (VVVIFLVCFAPYHLVLLVKAAAF). The Extracellular portion of the chain corresponds to 270–288 (SYYRGDRNAMCGLEERLYT). The chain crosses the membrane as a helical span at residues 289 to 311 (ASVVFLCLSTVNGVADPIIYVLA). The Cytoplasmic portion of the chain corresponds to 312-380 (TDHSRQEVSR…PAKRLIEESC (69 aa)).

Belongs to the G-protein coupled receptor 1 family. Highly expressed in macrophages and hematopoietic tissues rich in lymphocytes, like spleen and thymus. Weakly expressed in heart and lung. In atherosclerotic plaques, expression is observed around the lipid core and at the shoulder region.

Its subcellular location is the cell membrane. May be a receptor for oxidized free fatty acids derived from linoleic and arachidonic acids such as 9-hydroxyoctadecadienoic acid (9-HODE). Activates a G alpha protein, most likely G alpha(q). May be involved in apoptosis. Functions at the G2/M checkpoint to delay mitosis. May function as a sensor that monitors the oxidative states and mediates appropriate cellular responses such as secretion of paracrine signals and attenuation of proliferation. May mediate ths accumulation of intracellular inositol phosphates at acidic pH through proton-sensing activity. This is Probable G-protein coupled receptor 132 (GPR132) from Homo sapiens (Human).